The following is a 181-amino-acid chain: MVEIFNYSTSIYEQHASNNRIVSDFRKEIQMEGISIRDVAKHAQILDMNPKPSALTSLLQTNQKSHWACFSPPNNFYKQRFSTPYLAPSLGSPDQQDEDIEKISSFLKVLTRGKFSYRSQITPFLSYKDKEEEEDEDPEEDDDDPRVQQGKVLLKALDLGVKSTNVMIDYVISRIFQFVQG.

The tract at residues 126 to 148 (SYKDKEEEEDEDPEEDDDDPRVQ) is disordered. Positions 131-144 (EEEEDEDPEEDDDD) are enriched in acidic residues.

Belongs to the chlamydial CPn_0422/CT_273/TC_0545 family.

This is an uncharacterized protein from Chlamydia pneumoniae (Chlamydophila pneumoniae).